A 465-amino-acid polypeptide reads, in one-letter code: 23S rRNA (uracil(1939)-C(5))-methyltransferase RlmD (465 aa).

Positions 1–20 (MSEAVPLSTPGASHAGAATD) are disordered. The 69-residue stretch at 12–80 (ASHAGAATDR…PTYEQAQVVD (69 aa)) folds into the TRAM domain. Residues cysteine 93, cysteine 99, cysteine 102, and cysteine 181 each coordinate [4Fe-4S] cluster. S-adenosyl-L-methionine contacts are provided by glutamine 289, phenylalanine 318, asparagine 323, glutamate 339, asparagine 367, and aspartate 388. Cysteine 421 serves as the catalytic Nucleophile.

Belongs to the class I-like SAM-binding methyltransferase superfamily. RNA M5U methyltransferase family. RlmD subfamily.

The enzyme catalyses uridine(1939) in 23S rRNA + S-adenosyl-L-methionine = 5-methyluridine(1939) in 23S rRNA + S-adenosyl-L-homocysteine + H(+). Functionally, catalyzes the formation of 5-methyl-uridine at position 1939 (m5U1939) in 23S rRNA. In Burkholderia thailandensis (strain ATCC 700388 / DSM 13276 / CCUG 48851 / CIP 106301 / E264), this protein is 23S rRNA (uracil(1939)-C(5))-methyltransferase RlmD.